Consider the following 152-residue polypeptide: MTTVWKVLVLHGPNLNLLGQREPGIYGSLTLGEIDACLREDGVDLEAEVSTFQSNSEGQLVTAIHGALGNYHGIVFNAAAYTHTSIALRDALAAVQLPCVEVHLSNIHKRESFRHISHIAPVAIGQICGFGLNSYRLGLRALVDYLNGQADS.

Tyr26 functions as the Proton acceptor in the catalytic mechanism. Substrate contacts are provided by Asn77, His83, and Asp90. His103 serves as the catalytic Proton donor. Substrate is bound by residues 104-105 and Arg114; that span reads LS.

Belongs to the type-II 3-dehydroquinase family. Homododecamer.

It catalyses the reaction 3-dehydroquinate = 3-dehydroshikimate + H2O. Its pathway is metabolic intermediate biosynthesis; chorismate biosynthesis; chorismate from D-erythrose 4-phosphate and phosphoenolpyruvate: step 3/7. In terms of biological role, catalyzes a trans-dehydration via an enolate intermediate. The protein is 3-dehydroquinate dehydratase (aroQ) of Synechocystis sp. (strain ATCC 27184 / PCC 6803 / Kazusa).